The sequence spans 165 residues: Large ribosomal subunit protein uL10 (165 aa).

Belongs to the universal ribosomal protein uL10 family. In terms of assembly, part of the ribosomal stalk of the 50S ribosomal subunit. The N-terminus interacts with L11 and the large rRNA to form the base of the stalk. The C-terminus forms an elongated spine to which L12 dimers bind in a sequential fashion forming a multimeric L10(L12)X complex.

Functionally, forms part of the ribosomal stalk, playing a central role in the interaction of the ribosome with GTP-bound translation factors. This chain is Large ribosomal subunit protein uL10, found in Burkholderia cenocepacia (strain HI2424).